A 375-amino-acid chain; its full sequence is Succinyl-diaminopimelate desuccinylase (375 aa).

Position 66 (histidine 66) interacts with Zn(2+). Residue aspartate 68 is part of the active site. Aspartate 99 is a Zn(2+) binding site. Glutamate 133 (proton acceptor) is an active-site residue. Residues glutamate 134, glutamate 162, and histidine 348 each contribute to the Zn(2+) site.

It belongs to the peptidase M20A family. DapE subfamily. In terms of assembly, homodimer. The cofactor is Zn(2+). Co(2+) is required as a cofactor.

It catalyses the reaction N-succinyl-(2S,6S)-2,6-diaminopimelate + H2O = (2S,6S)-2,6-diaminopimelate + succinate. It participates in amino-acid biosynthesis; L-lysine biosynthesis via DAP pathway; LL-2,6-diaminopimelate from (S)-tetrahydrodipicolinate (succinylase route): step 3/3. Functionally, catalyzes the hydrolysis of N-succinyl-L,L-diaminopimelic acid (SDAP), forming succinate and LL-2,6-diaminopimelate (DAP), an intermediate involved in the bacterial biosynthesis of lysine and meso-diaminopimelic acid, an essential component of bacterial cell walls. The sequence is that of Succinyl-diaminopimelate desuccinylase from Enterobacter sp. (strain 638).